The following is a 399-amino-acid chain: Nicotinate phosphoribosyltransferase 1 (399 aa).

His224 carries the post-translational modification Phosphohistidine; by autocatalysis.

Belongs to the NAPRTase family. Post-translationally, transiently phosphorylated on a His residue during the reaction cycle. Phosphorylation strongly increases the affinity for substrates and increases the rate of nicotinate D-ribonucleotide production. Dephosphorylation regenerates the low-affinity form of the enzyme, leading to product release.

It carries out the reaction nicotinate + 5-phospho-alpha-D-ribose 1-diphosphate + ATP + H2O = nicotinate beta-D-ribonucleotide + ADP + phosphate + diphosphate. Its pathway is cofactor biosynthesis; NAD(+) biosynthesis; nicotinate D-ribonucleotide from nicotinate: step 1/1. In terms of biological role, catalyzes the synthesis of beta-nicotinate D-ribonucleotide from nicotinate and 5-phospho-D-ribose 1-phosphate at the expense of ATP. This chain is Nicotinate phosphoribosyltransferase 1, found in Pseudomonas aeruginosa (strain ATCC 15692 / DSM 22644 / CIP 104116 / JCM 14847 / LMG 12228 / 1C / PRS 101 / PAO1).